Reading from the N-terminus, the 206-residue chain is Dephospho-CoA kinase (206 aa).

Positions 4-200 (TVALTGGIGS…ASYLKLASQF (197 aa)) constitute a DPCK domain. 12-17 (GSGKST) lines the ATP pocket.

This sequence belongs to the CoaE family.

It localises to the cytoplasm. The enzyme catalyses 3'-dephospho-CoA + ATP = ADP + CoA + H(+). It participates in cofactor biosynthesis; coenzyme A biosynthesis; CoA from (R)-pantothenate: step 5/5. Functionally, catalyzes the phosphorylation of the 3'-hydroxyl group of dephosphocoenzyme A to form coenzyme A. The sequence is that of Dephospho-CoA kinase from Salmonella paratyphi A (strain ATCC 9150 / SARB42).